The chain runs to 366 residues: MEKEGVKNYLVLVVDIDDDIGRKAGLNTPILGREENIKALIKLGLADPGDSDVNAILGGVKIYDELKASGKDVEIATISGDVDVESEKCALRIKEQIDFLLYLYNPDFIYLVSDGKEDEMILKYLESKNIFVWKKRVIVKQSETLESTYYLIQEFIKKTMEEYIPLILTFIGFSLILYAIFADIGWRIVVGIIGLYILSEGVGVRKLLMEKIKKKEEFDVGRVFPISASISIFILIIGLIYSLSSINKTSSTLTEFIGEFLLHFVDSLTLSLLILMVGKFVDTIINSEKDLLEILKKYFFCLICIFISRELIISGGEYLLKKISFIMFVMCVIIYISIVIILSVILFTKSSKEDKFKKLKNSITKG.

Transmembrane regions (helical) follow at residues 164–184, 188–208, 223–243, 256–276, 299–319, and 325–345; these read IPLI…FADI, IVVG…RKLL, VFPI…IYSL, FIGE…LILM, FFCL…GEYL, and FIMF…LSVI.

This sequence to A.fulgidus AF2058.

It localises to the cell membrane. This is an uncharacterized protein from Methanocaldococcus jannaschii (strain ATCC 43067 / DSM 2661 / JAL-1 / JCM 10045 / NBRC 100440) (Methanococcus jannaschii).